The sequence spans 432 residues: Adenylosuccinate synthetase (432 aa).

Residues 12–18 (GDEGKGK) and 40–42 (GHT) contribute to the GTP site. Aspartate 13 serves as the catalytic Proton acceptor. The Mg(2+) site is built by aspartate 13 and glycine 40. Residues 13-16 (DEGK), 38-41 (NAGH), threonine 132, arginine 146, glutamine 226, threonine 241, and arginine 305 contribute to the IMP site. The Proton donor role is filled by histidine 41. Substrate is bound at residue 301–307 (TVTGRKR). GTP contacts are provided by residues arginine 307, 333–335 (KLD), and 415–417 (STS).

This sequence belongs to the adenylosuccinate synthetase family. In terms of assembly, homodimer. Mg(2+) is required as a cofactor.

The protein resides in the cytoplasm. It catalyses the reaction IMP + L-aspartate + GTP = N(6)-(1,2-dicarboxyethyl)-AMP + GDP + phosphate + 2 H(+). It participates in purine metabolism; AMP biosynthesis via de novo pathway; AMP from IMP: step 1/2. Plays an important role in the de novo pathway of purine nucleotide biosynthesis. Catalyzes the first committed step in the biosynthesis of AMP from IMP. In Allorhizobium ampelinum (strain ATCC BAA-846 / DSM 112012 / S4) (Agrobacterium vitis (strain S4)), this protein is Adenylosuccinate synthetase.